The following is a 571-amino-acid chain: Ubiquitin-like-specific protease 1C (571 aa).

The disordered stretch occupies residues 221–260 (SESKDPKGDRRPNEAYGKGKPNESSPYLLVDDDDGDDDKV). The segment covering 222–233 (ESKDPKGDRRPN) has biased composition (basic and acidic residues). Residues His426, Asp449, and Cys512 contribute to the active site.

Belongs to the peptidase C48 family.

The protein localises to the nucleus. Its subcellular location is the nucleoplasm. In terms of biological role, protease that catalyzes two essential functions in the SUMO pathway: processing of full-length SUMOs to their mature forms and deconjugation of SUMO from targeted proteins. Cleaves precursors of SUM1 and SUM2, but not of SUM3 or SUM5. Able to release SUM1 and SUM2 from conjugates, but unable to cleave SUM3. Protease activity mainly directed at deconjugating SUM1 and SUM2 from their target proteins. Regulates salt stress responses and flowering time. Redundant with ULP1D. The polypeptide is Ubiquitin-like-specific protease 1C (ULP1C) (Arabidopsis thaliana (Mouse-ear cress)).